Reading from the N-terminus, the 347-residue chain is Zinc finger protein CONSTANS-LIKE 2 (347 aa).

8 residues coordinate Zn(2+): Cys16, Cys19, Cys39, His44, Cys59, Cys62, Cys82, and His87. Residues 16 to 58 (CDTCRSAACTVYCEADSAYLCTTCDARVHAANRVASRHERVRV) form a B box-type 1; atypical zinc finger. The B box-type 2; atypical zinc finger occupies 59–101 (CQSCESAPAAFLCKADAASLCTACDAEIHSANPLARRHQRVPI). A CCT domain is found at 278–320 (REARVLRYREKKKTRKFDKTIRYASRKAYAEIRPRIKGRFAKR).

It belongs to the CONSTANS family. In terms of tissue distribution, highly expressed in leaves. Expressed at lower levels in stems, flowers and siliques. Not detected in roots.

It localises to the nucleus. Its function is as follows. Putative transcription factor. Does not affect flowering time. This Arabidopsis thaliana (Mouse-ear cress) protein is Zinc finger protein CONSTANS-LIKE 2 (COL2).